The sequence spans 155 residues: SsrA-binding protein (155 aa).

The segment at 135–155 (KRESLKRRQDQRDIQRAMKNY) is disordered.

This sequence belongs to the SmpB family.

It localises to the cytoplasm. Its function is as follows. Required for rescue of stalled ribosomes mediated by trans-translation. Binds to transfer-messenger RNA (tmRNA), required for stable association of tmRNA with ribosomes. tmRNA and SmpB together mimic tRNA shape, replacing the anticodon stem-loop with SmpB. tmRNA is encoded by the ssrA gene; the 2 termini fold to resemble tRNA(Ala) and it encodes a 'tag peptide', a short internal open reading frame. During trans-translation Ala-aminoacylated tmRNA acts like a tRNA, entering the A-site of stalled ribosomes, displacing the stalled mRNA. The ribosome then switches to translate the ORF on the tmRNA; the nascent peptide is terminated with the 'tag peptide' encoded by the tmRNA and targeted for degradation. The ribosome is freed to recommence translation, which seems to be the essential function of trans-translation. This is SsrA-binding protein from Trichormus variabilis (strain ATCC 29413 / PCC 7937) (Anabaena variabilis).